The sequence spans 208 residues: MGVTVVSHPLVKHKLTIMRKKETSTASFRRLLKEISLLLCYEVTRNLELTTMSIETPLMPMEAPVLEGKKLVFASILRAGNGLLEGMLDLVPAARVAHIGLYRDHDTLQPIEYYFKAPEDIVNRLVIVVDPMLATANSAIAAIDKLKERGATNIRFLCLLAAPEGIERFTKAHPDVEVFTASIDECLDEKGYIVPGLGDAGDRMYGTK.

Residues Arg-78, Arg-103, and 130–138 (DPMLATANS) each bind 5-phospho-alpha-D-ribose 1-diphosphate. Residues Ile-193 and 198–200 (GDA) each bind uracil. A 5-phospho-alpha-D-ribose 1-diphosphate-binding site is contributed by Asp-199.

The protein belongs to the UPRTase family. Mg(2+) is required as a cofactor.

The enzyme catalyses UMP + diphosphate = 5-phospho-alpha-D-ribose 1-diphosphate + uracil. The protein operates within pyrimidine metabolism; UMP biosynthesis via salvage pathway; UMP from uracil: step 1/1. Its activity is regulated as follows. Allosterically activated by GTP. Functionally, catalyzes the conversion of uracil and 5-phospho-alpha-D-ribose 1-diphosphate (PRPP) to UMP and diphosphate. This is Uracil phosphoribosyltransferase from Brucella abortus biovar 1 (strain 9-941).